The chain runs to 115 residues: UPF0295 protein BLi00901/BL05075 (115 aa).

2 helical membrane passes run 18-38 (LVFIGFIIMYVGVFFRSSVLL) and 41-61 (VFMILGVLSILLSTAVYFWIG).

The protein belongs to the UPF0295 family.

The protein resides in the cell membrane. This Bacillus licheniformis (strain ATCC 14580 / DSM 13 / JCM 2505 / CCUG 7422 / NBRC 12200 / NCIMB 9375 / NCTC 10341 / NRRL NRS-1264 / Gibson 46) protein is UPF0295 protein BLi00901/BL05075.